Here is a 186-residue protein sequence, read N- to C-terminus: Ribosome-recycling factor (186 aa).

This sequence belongs to the RRF family.

The protein localises to the cytoplasm. Responsible for the release of ribosomes from messenger RNA at the termination of protein biosynthesis. May increase the efficiency of translation by recycling ribosomes from one round of translation to another. In Rickettsia rickettsii (strain Iowa), this protein is Ribosome-recycling factor.